A 263-amino-acid chain; its full sequence is Polyglutamine-binding protein 1 (263 aa).

The region spanning glutamate 46–aspartate 80 is the WW domain. Residues asparagine 94–aspartate 263 are disordered. The span at alanine 99–aspartate 173 shows a compositional bias: basic and acidic residues. A 1-1; approximate repeat occupies glutamate 104–valine 110. The 5 X 7 AA approximate tandem repeats of D-R-[NS]-H-E-K-S stretch occupies residues glutamate 104–serine 138. The 1-2 repeat unit spans residues aspartate 111 to serine 117. One copy of the 1-3; approximate repeat lies at aspartate 118–proline 124. The stretch at aspartate 125–alanine 131 is one 1-4; approximate repeat. 10 repeat units span residues aspartate 132–serine 138, aspartate 139–arginine 140, glutamate 141–arginine 142, glutamate 143–arginine 144, aspartate 150–arginine 151, glutamate 152–arginine 153, aspartate 154–arginine 155, aspartate 156–arginine 157, glutamate 158–arginine 159, and glutamate 160–arginine 161. Positions aspartate 139–arginine 144 are 3 X 2 AA tandem repeats of [DE]-R. Residues aspartate 150–arginine 161 are 6 X 2 AA tandem repeats of [DE]-R. The interval tyrosine 243 to asparagine 253 is important for interaction with TXNL4A. The residue at position 245 (serine 245) is a Phosphoserine.

In terms of assembly, interacts with POU3F2/Brn-2, ATXN1, TXNL4A, HTT and AR. Interaction with ATXN1 correlates positively with the length of the polyglutamine tract. Interacts with RNA polymerase II large subunit in a phosphorylation-dependent manner. Forms a ternary complex with ATXN1 mutant and phosphorylated RNA polymerase II. Interacts (via C-terminus) with TXNL4A and CD2BP2. Interacts (via WW domain) with ATN1 and SF3B1, and may interact with additional splice factors. Interacts (via WW domain) with WBP11; Leading to reduce interaction between PQBP1 and TXNL4A. Interacts with CAPRIN1. Interacts with DDX1. Interacts with SFPQ. Interacts with KHSRP.

Its subcellular location is the nucleus. The protein localises to the nucleus speckle. The protein resides in the cytoplasmic granule. In terms of biological role, intrinsically disordered protein that acts as a scaffold, and which is involved in different processes, such as pre-mRNA splicing, transcription regulation, innate immunity and neuron development. Interacts with splicing-related factors via the intrinsically disordered region and regulates alternative splicing of target pre-mRNA species. May suppress the ability of POU3F2 to transactivate the DRD1 gene in a POU3F2 dependent manner. Can activate transcription directly or via association with the transcription machinery. May be involved in ATXN1 mutant-induced cell death. The interaction with ATXN1 mutant reduces levels of phosphorylated RNA polymerase II large subunit. Involved in the assembly of cytoplasmic stress granule, possibly by participating in the transport of neuronal RNA granules. Also acts as an innate immune sensor of infection by retroviruses, by detecting the presence of reverse-transcribed DNA in the cytosol. Directly binds retroviral reverse-transcribed DNA in the cytosol and interacts with CGAS, leading to activate the cGAS-STING signaling pathway, triggering type-I interferon production. In Rattus norvegicus (Rat), this protein is Polyglutamine-binding protein 1 (Pqbp1).